Consider the following 270-residue polypeptide: 4-hydroxy-tetrahydrodipicolinate reductase (270 aa).

NAD(+) is bound by residues 11 to 16 and glutamate 37; that span reads GASGRM. Residue arginine 38 coordinates NADP(+). Residues 101–103 and 125–128 each bind NAD(+); these read GTT and APNM. Histidine 158 functions as the Proton donor/acceptor in the catalytic mechanism. Residue histidine 159 participates in (S)-2,3,4,5-tetrahydrodipicolinate binding. Lysine 162 acts as the Proton donor in catalysis. A (S)-2,3,4,5-tetrahydrodipicolinate-binding site is contributed by 168–169; it reads GT.

This sequence belongs to the DapB family.

Its subcellular location is the cytoplasm. The enzyme catalyses (S)-2,3,4,5-tetrahydrodipicolinate + NAD(+) + H2O = (2S,4S)-4-hydroxy-2,3,4,5-tetrahydrodipicolinate + NADH + H(+). The catalysed reaction is (S)-2,3,4,5-tetrahydrodipicolinate + NADP(+) + H2O = (2S,4S)-4-hydroxy-2,3,4,5-tetrahydrodipicolinate + NADPH + H(+). It participates in amino-acid biosynthesis; L-lysine biosynthesis via DAP pathway; (S)-tetrahydrodipicolinate from L-aspartate: step 4/4. Catalyzes the conversion of 4-hydroxy-tetrahydrodipicolinate (HTPA) to tetrahydrodipicolinate. This is 4-hydroxy-tetrahydrodipicolinate reductase from Shewanella amazonensis (strain ATCC BAA-1098 / SB2B).